A 156-amino-acid chain; its full sequence is Small ribosomal subunit protein uS7cz/uS7cy (156 aa).

Belongs to the universal ribosomal protein uS7 family. As to quaternary structure, part of the 30S ribosomal subunit.

Its subcellular location is the plastid. The protein resides in the chloroplast. One of the primary rRNA binding proteins, it binds directly to 16S rRNA where it nucleates assembly of the head domain of the 30S subunit. The polypeptide is Small ribosomal subunit protein uS7cz/uS7cy (rps7-A) (Saccharum hybrid (Sugarcane)).